Here is a 35-residue protein sequence, read N- to C-terminus: Photosystem II reaction center protein M (35 aa).

Met-1 carries the N-formylmethionine modification. Residues 7-28 (GFIASILFVLVPTVFLLILFIQ) traverse the membrane as a helical segment.

The protein belongs to the PsbM family. As to quaternary structure, PSII is composed of 1 copy each of membrane proteins PsbA, PsbB, PsbC, PsbD, PsbE, PsbF, PsbH, PsbI, PsbJ, PsbK, PsbL, PsbM, PsbT, PsbX, PsbY, PsbZ, Psb30/Ycf12, peripheral proteins PsbO, CyanoQ (PsbQ), PsbU, PsbV and a large number of cofactors. It forms dimeric complexes.

It is found in the cellular thylakoid membrane. Its function is as follows. One of the components of the core complex of photosystem II (PSII). PSII is a light-driven water:plastoquinone oxidoreductase that uses light energy to abstract electrons from H(2)O, generating O(2) and a proton gradient subsequently used for ATP formation. It consists of a core antenna complex that captures photons, and an electron transfer chain that converts photonic excitation into a charge separation. This subunit is found at the monomer-monomer interface. Involved in assembly of monomeric PSII from the CP43-less intermediate. This chain is Photosystem II reaction center protein M, found in Synechocystis sp. (strain ATCC 27184 / PCC 6803 / Kazusa).